Here is a 405-residue protein sequence, read N- to C-terminus: L-rhamnonate dehydratase (405 aa).

Substrate is bound by residues histidine 33 and arginine 59. Aspartate 226, glutamate 252, and glutamate 280 together coordinate Mg(2+). The active-site Proton acceptor is the histidine 329. Glutamate 349 is a binding site for substrate.

It belongs to the mandelate racemase/muconate lactonizing enzyme family. RhamD subfamily. As to quaternary structure, homooctamer; tetramer of dimers. Requires Mg(2+) as cofactor.

It carries out the reaction L-rhamnonate = 2-dehydro-3-deoxy-L-rhamnonate + H2O. In terms of biological role, catalyzes the dehydration of L-rhamnonate to 2-keto-3-deoxy-L-rhamnonate (KDR). The protein is L-rhamnonate dehydratase of Escherichia coli O6:K15:H31 (strain 536 / UPEC).